The primary structure comprises 813 residues: Cadherin-22 (813 aa).

An N-terminal signal peptide occupies residues 1–33; the sequence is MRPRPEGALRAGAALSPVLLFLLLLPLLGHLWA. Residues 34 to 621 are Extracellular-facing; sequence ASTPAPSSLS…AFVMAASLSP (588 aa). 5 Cadherin domains span residues 61 to 165, 166 to 274, 275 to 391, 392 to 495, and 496 to 613; these read WVWN…EPRF, LHGP…PPRF, PQKM…PPEF, RPPS…NPPE, and LATP…TTAF. The N-linked (GlcNAc...) asparagine glycan is linked to Asn-159. 2 N-linked (GlcNAc...) asparagine glycosylation sites follow: Asn-463 and Asn-609. Residues 622–642 form a helical membrane-spanning segment; sequence GALIALLVCVLILVVLALLIL. Residues 643 to 813 are Cytoplasmic-facing; the sequence is TLRRHHKSHL…HRGDDEAPAS (171 aa). The interval 696-726 is disordered; the sequence is GGDPGGGAASPPQAASSSERHSLPRGPSSPE.

As to expression, predominantly expressed in brain. Abundant in olfactory bulb, cerebrum, and cerebellum, less in pons, medulla, and spinal cord. Low expression in heart. No expression in lung, liver, spleen, kidney, testis, stomach, intestine, colon, and placenta.

It localises to the cell membrane. In terms of biological role, cadherins are calcium-dependent cell adhesion proteins. They preferentially interact with themselves in a homophilic manner in connecting cells; cadherins may thus contribute to the sorting of heterogeneous cell types. PB-cadherins may have a role in the morphological organization of pituitary gland and brain tissues. In Mus musculus (Mouse), this protein is Cadherin-22 (Cdh22).